The primary structure comprises 339 residues: Ferrochelatase (339 aa).

His-202 and Glu-283 together coordinate Fe cation.

Belongs to the ferrochelatase family.

It is found in the cytoplasm. It catalyses the reaction heme b + 2 H(+) = protoporphyrin IX + Fe(2+). The protein operates within porphyrin-containing compound metabolism; protoheme biosynthesis; protoheme from protoporphyrin-IX: step 1/1. Functionally, catalyzes the ferrous insertion into protoporphyrin IX. The sequence is that of Ferrochelatase from Psychrobacter arcticus (strain DSM 17307 / VKM B-2377 / 273-4).